The primary structure comprises 481 residues: Multiple inositol polyphosphate phosphatase 1 (481 aa).

The first 30 residues, 1-30, serve as a signal peptide directing secretion; sequence MLRGARSHLPASVAPAAVLAAALLSSFARC. Histidine 89 is an active-site residue. Residues asparagine 236 and asparagine 475 are each glycosylated (N-linked (GlcNAc...) asparagine). Positions 478-481 match the Prevents secretion from ER motif; sequence SDEL.

Belongs to the histidine acid phosphatase family. MINPP1 subfamily. Post-translationally, N-glycosylated. As to expression, widely expressed with highest levels in kidney, intestine, thymus and liver.

The protein localises to the endoplasmic reticulum lumen. The protein resides in the secreted. Its subcellular location is the cell membrane. It carries out the reaction 1D-myo-inositol hexakisphosphate + H2O = 1D-myo-inositol 1,2,4,5,6-pentakisphosphate + phosphate. The enzyme catalyses 1D-myo-inositol 1,2,4,5,6-pentakisphosphate + H2O = 1D-myo-inositol 1,2,5,6-tetrakisphosphate + phosphate. The catalysed reaction is 1D-myo-inositol 1,2,5,6-tetrakisphosphate + H2O = 1D-myo-inositol 1,2,6-trisphosphate + phosphate. It catalyses the reaction 1D-myo-inositol 1,2,6-trisphosphate + H2O = 1D-myo-inositol 1,2-bisphosphate + phosphate. It carries out the reaction 1D-myo-inositol 1,2-bisphosphate + H2O = 1D-myo-inositol 2-phosphate + phosphate. The enzyme catalyses 1D-myo-inositol hexakisphosphate + H2O = 1D-myo-inositol 1,2,3,5,6-pentakisphosphate + phosphate. The catalysed reaction is 1D-myo-inositol 1,2,3,5,6-pentakisphosphate + H2O = 1D-myo-inositol 1,2,3,6-tetrakisphosphate + phosphate. It catalyses the reaction 1D-myo-inositol 1,2,3,6-tetrakisphosphate + H2O = 1D-myo-inositol 1,2,3-trisphosphate + phosphate. It carries out the reaction 1D-myo-inositol 1,2,3-trisphosphate + H2O = 1D-myo-inositol 2,3-bisphosphate + phosphate. The enzyme catalyses 1D-myo-inositol 2,3-bisphosphate + H2O = 1D-myo-inositol 2-phosphate + phosphate. The catalysed reaction is 1D-myo-inositol 1,3,4,5,6-pentakisphosphate + H2O = 1D-myo-inositol 1,4,5,6-tetrakisphosphate + phosphate. It catalyses the reaction 1D-myo-inositol 1,4,5,6-tetrakisphosphate + H2O = 1D-myo-inositol 1,4,5-trisphosphate + phosphate. It carries out the reaction (2R)-2,3-bisphosphoglycerate + H2O = (2R)-2-phosphoglycerate + phosphate. In terms of biological role, multiple inositol polyphosphate phosphatase that hydrolyzes 1D-myo-inositol 1,3,4,5,6-pentakisphosphate (InsP5[2OH]) and 1D-myo-inositol hexakisphosphate (InsP6) to a range of less phosphorylated inositol phosphates. This regulates the availability of these various small molecule second messengers and metal chelators which control many aspects of cell physiology. Has a weak in vitro activity towards 1D-myo-inositol 1,4,5-trisphosphate which is unlikely to be physiologically relevant. By regulating intracellular inositol polyphosphates pools, which act as metal chelators, it may control the availability of intracellular calcium and iron, which are important for proper neuronal development and homeostasis. May have a dual substrate specificity, and function as a 2,3-bisphosphoglycerate 3-phosphatase hydrolyzing 2,3-bisphosphoglycerate to 2-phosphoglycerate. 2,3-bisphosphoglycerate (BPG) is formed as part of the Rapoport-Luebering glycolytic bypass and is a regulator of systemic oxygen homeostasis as the major allosteric effector of hemoglobin. This Mus musculus (Mouse) protein is Multiple inositol polyphosphate phosphatase 1.